The chain runs to 37 residues: Large ribosomal subunit protein bL36 (37 aa).

It belongs to the bacterial ribosomal protein bL36 family.

This Marinobacter nauticus (strain ATCC 700491 / DSM 11845 / VT8) (Marinobacter aquaeolei) protein is Large ribosomal subunit protein bL36.